The primary structure comprises 328 residues: Sialic acid-binding Ig-like lectin 15 (328 aa).

Residues 1 to 19 form the signal peptide; the sequence is MEKSIWLLACLAWVLPTGS. At 20–263 the chain is on the extracellular side; that stretch reads FVRTKIDTTE…RFHGASGAST (244 aa). Residues 40 to 158 form the Ig-like V-type domain; that stretch reads PAQRWSMQVP…DVHDRYESRH (119 aa). Cystine bridges form between cysteine 64/cysteine 142 and cysteine 95/cysteine 104. Arginine 143 is an N-acetylneuraminate binding site. An Ig-like C2-type domain is found at 168–251; the sequence is PRIVNISVLP…SLGRSEASVY (84 aa). A glycan (N-linked (GlcNAc...) asparagine) is linked at asparagine 172. Residues cysteine 187 and cysteine 237 are joined by a disulfide bond. Residues 264-284 traverse the membrane as a helical segment; the sequence is VALLLGALGFKALLLLGVLAA. The Cytoplasmic portion of the chain corresponds to 285–328; sequence RAARRRPEHLDTPDTPPRSQAQESNYENLSQMNPRSPPATMCSP. Residues 289-328 form a disordered region; the sequence is RRPEHLDTPDTPPRSQAQESNYENLSQMNPRSPPATMCSP. Over residues 301 to 318 the composition is skewed to polar residues; that stretch reads PRSQAQESNYENLSQMNP.

The protein belongs to the immunoglobulin superfamily. SIGLEC (sialic acid binding Ig-like lectin) family. Interacts with TYROBP and HCST. In terms of tissue distribution, expressed in macrophage and/or dendritic cells of spleen and lymph nodes.

It is found in the membrane. In terms of biological role, binds sialylated glycoproteins. This is Sialic acid-binding Ig-like lectin 15 (SIGLEC15) from Homo sapiens (Human).